We begin with the raw amino-acid sequence, 417 residues long: D-amino acid dehydrogenase (417 aa).

An FAD-binding site is contributed by 3–17 (VVILGSGVVGVSTAW).

This sequence belongs to the DadA oxidoreductase family. FAD serves as cofactor.

The catalysed reaction is a D-alpha-amino acid + A + H2O = a 2-oxocarboxylate + AH2 + NH4(+). It participates in amino-acid degradation; D-alanine degradation; NH(3) and pyruvate from D-alanine: step 1/1. Oxidative deamination of D-amino acids. In Pectobacterium atrosepticum (strain SCRI 1043 / ATCC BAA-672) (Erwinia carotovora subsp. atroseptica), this protein is D-amino acid dehydrogenase.